The primary structure comprises 410 residues: Arginine deiminase (410 aa).

The active-site Amidino-cysteine intermediate is the Cys-400.

Belongs to the arginine deiminase family.

Its subcellular location is the cytoplasm. It catalyses the reaction L-arginine + H2O = L-citrulline + NH4(+). The protein operates within amino-acid degradation; L-arginine degradation via ADI pathway; carbamoyl phosphate from L-arginine: step 1/2. This Streptococcus agalactiae serotype III (strain NEM316) protein is Arginine deiminase.